The primary structure comprises 239 residues: SkfA peptide export ATP-binding protein SkfE (239 aa).

The ABC transporter domain maps to 4-232 (MQVQNLSKCY…AEWRKEVIRL (229 aa)). Position 36–43 (36–43 (GPNGAGKT)) interacts with ATP.

This sequence belongs to the ABC transporter superfamily. SkfA peptide export (TC 3.A.1.128.1) family.

The protein localises to the cell membrane. The enzyme catalyses sulfate(out) + ATP + H2O = sulfate(in) + ADP + phosphate + H(+). It carries out the reaction thiosulfate(out) + ATP + H2O = thiosulfate(in) + ADP + phosphate + H(+). Its function is as follows. Probably part of the ABC transporter SkfEF involved in the export of the bacteriocin SKF. Probably responsible for energy coupling to the transport system. This Bacillus subtilis (strain 168) protein is SkfA peptide export ATP-binding protein SkfE.